The sequence spans 213 residues: Probable nicotinate-nucleotide adenylyltransferase (213 aa).

It belongs to the NadD family.

The catalysed reaction is nicotinate beta-D-ribonucleotide + ATP + H(+) = deamido-NAD(+) + diphosphate. It participates in cofactor biosynthesis; NAD(+) biosynthesis; deamido-NAD(+) from nicotinate D-ribonucleotide: step 1/1. Catalyzes the reversible adenylation of nicotinate mononucleotide (NaMN) to nicotinic acid adenine dinucleotide (NaAD). This is Probable nicotinate-nucleotide adenylyltransferase from Ruegeria pomeroyi (strain ATCC 700808 / DSM 15171 / DSS-3) (Silicibacter pomeroyi).